A 253-amino-acid polypeptide reads, in one-letter code: Tropomyosin-1 (253 aa).

Residues 7–253 (VNKLVRLQGK…MDDVGDDDTQ (247 aa)) adopt a coiled-coil conformation.

This sequence belongs to the tropomyosin family. Homodimer.

Its function is as follows. Tropomyosin, in association with the troponin complex, plays a central role in the calcium dependent regulation of muscle contraction. The protein is Tropomyosin-1 (TROP1) of Hydra vulgaris (Hydra).